The sequence spans 406 residues: Oligouridylate-binding protein 1 (406 aa).

RRM domains follow at residues 49–123 and 134–212; these read RSVY…WAYA and YNIF…WAAK. Residues 231–250 form a disordered region; that stretch reads TSGTSDDGQEKVVNEDAPEN. In terms of domain architecture, RRM 3 spans 255–329; the sequence is TTVYVGNLAP…KPVKCSWGSK (75 aa).

The protein localises to the nucleus. In terms of biological role, heterogeneous nuclear ribonucleoprotein (hnRNP)-like protein that acts as a component of the pre-mRNA processing machinery. Functions to facilitate the nuclear maturation of plant pre-mRNAs. Binds with high affinity to RNA molecules that contain AU-rich regions. May bind to the 3'-UTR and protects the mRNA against exonucleolytic degradation. Associates with nuclear poly(A)+ RNA in nucleus in vivo. Does not stimulate transcription or the 3' end cleavage/polyadenylation reaction. This chain is Oligouridylate-binding protein 1 (UBP1), found in Nicotiana plumbaginifolia (Leadwort-leaved tobacco).